Reading from the N-terminus, the 982-residue chain is Nitrate reductase [NADPH] (982 aa).

The segment at 1–128 (MEAPALEQRQ…PPSTRLTTIL (128 aa)) is disordered. Residues 10–20 (QSLHDSSERQQ) are compositionally biased toward basic and acidic residues. Residues 63-110 (TASPTTTDFSSSSSDDNSTTLETSVNYSHSSNTNTNTSCPPSPITSSS) show a composition bias toward low complexity. A Mo-molybdopterin-binding site is contributed by Cys-240. The region spanning 617–692 (TRLITLEELR…MPTYHIGTLT (76 aa)) is the Cytochrome b5 heme-binding domain. Heme contacts are provided by His-652 and His-675. An FAD-binding FR-type domain is found at 721-836 (KTWNSAILTF…KGPVGKFVYQ (116 aa)). FAD-binding positions include 776 to 779 (RAYT), 794 to 798 (LVKIY), 810 to 812 (QMT), Ser-860, and Thr-863. Residue 952–961 (MVLLCGPEGM) participates in NADP(+) binding.

The protein belongs to the nitrate reductase family. Homodimer. It depends on FAD as a cofactor. Requires heme as cofactor. Mo-molybdopterin is required as a cofactor.

It catalyses the reaction nitrite + NADP(+) + H2O = nitrate + NADPH + H(+). It functions in the pathway nitrogen metabolism; nitrate reduction (assimilation). In terms of biological role, nitrate reductase is a key enzyme involved in the first step of nitrate assimilation in plants, fungi and bacteria. This Neurospora crassa (strain ATCC 24698 / 74-OR23-1A / CBS 708.71 / DSM 1257 / FGSC 987) protein is Nitrate reductase [NADPH] (nit-3).